The sequence spans 610 residues: MSTAPAAFDIKTFLATLTGAPGVYKMLDRNGEVIYVGKAKNLKKRVASHFAQRGSSPKQNAMVARVQAIEVTVTRTEGEALLLENQLIKRHKPRYNINLRDDKSYPYIYVSTHQEFPRLAFHRGSRARPGRFFGPFPSAAAVRDSLKTLQKIFPVRQCEDSYFVNRTRPCLQYQIERCTGPCVGLVGAETYGEDVTNTLLFLEGRGEALIDRLAQRMEQAAQRLEFEKAARYRDQISNLRTVLAKQLVAGEQGDLDMIACAIKGNIACVHVVFVRNGQQIGDRSFFPRMQDEHDAAAVLGAFIPQFYLDKEIPRELLLSHEIRELELFESVLGQQAGRPVKISWRLRGERAKRLELARANAECALTTRLASQQTIADRLRHLTEMLGLAEPPKRMECFDISHTQGDQTVASCVVFDRTGPLKSAYRRFNIEGITGGDDYAAMAQALSRRYQRIRAGEVEAPDILFIDGGKGQIHAAARTLAELGVENIRIIGIAKGPDRKPGMETLFQTGCSDPIVVKPDNPGSLLIQHIRDEAHRFAITGHRQRRAKTVTRSPLQAIAGLGPKRRQRLLRQFGGLRQISRADVEALSSVEGINRQLAQRIYDLFHDHGA.

Residues 19–97 (GAPGVYKMLD…IKRHKPRYNI (79 aa)) enclose the GIY-YIG domain. Residues 207–242 (EALIDRLAQRMEQAAQRLEFEKAARYRDQISNLRTV) form the UVR domain.

The protein belongs to the UvrC family. Interacts with UvrB in an incision complex.

The protein resides in the cytoplasm. Its function is as follows. The UvrABC repair system catalyzes the recognition and processing of DNA lesions. UvrC both incises the 5' and 3' sides of the lesion. The N-terminal half is responsible for the 3' incision and the C-terminal half is responsible for the 5' incision. The sequence is that of UvrABC system protein C from Methylococcus capsulatus (strain ATCC 33009 / NCIMB 11132 / Bath).